Reading from the N-terminus, the 493-residue chain is 3-octaprenyl-4-hydroxybenzoate carboxy-lyase (493 aa).

Asn-172 is a Mn(2+) binding site. Prenylated FMN contacts are provided by residues 175–177 (IYR), 189–191 (RWL), and 194–195 (RG). Residue Glu-238 participates in Mn(2+) binding. The active-site Proton donor is Asp-287.

Belongs to the UbiD family. Homohexamer. Requires prenylated FMN as cofactor. The cofactor is Mn(2+).

The protein resides in the cell membrane. It carries out the reaction a 4-hydroxy-3-(all-trans-polyprenyl)benzoate + H(+) = a 2-(all-trans-polyprenyl)phenol + CO2. It functions in the pathway cofactor biosynthesis; ubiquinone biosynthesis. Its function is as follows. Catalyzes the decarboxylation of 3-octaprenyl-4-hydroxy benzoate to 2-octaprenylphenol, an intermediate step in ubiquinone biosynthesis. The chain is 3-octaprenyl-4-hydroxybenzoate carboxy-lyase from Shewanella woodyi (strain ATCC 51908 / MS32).